An 859-amino-acid chain; its full sequence is Protein argonaute-2 (859 aa).

Residues 1–27 (MYSGAGPALAPPAPPPPIQGYAFKPPP) are disordered. Tyr2 carries the 3'-nitrotyrosine modification. The segment covering 9-27 (LAPPAPPPPIQGYAFKPPP) has biased composition (pro residues). In terms of domain architecture, PAZ spans 229 to 348 (PVIEFVCEVL…LPLEVCNIVA (120 aa)). The segment at 311-316 (YFKDRH) is interaction with guide RNA. The residue at position 387 (Ser387) is a Phosphoserine. A Piwi domain is found at 517-818 (LVVVILPGKT…VAFRARYHLV (302 aa)). The tract at residues 524-566 (GKTPVYAEVKRVGDTVLGMATQCVQMKNVQRTTPQTLSNLCLK) is interaction with guide RNA. An interaction with GW182 family members region spans residues 587–590 (FQQP). Asp597 lines the a divalent metal cation pocket. The tract at residues 650-660 (LIQFYKSTRFK) is interaction with GW182 family members. An a divalent metal cation-binding site is contributed by Asp669. At Pro700 the chain carries 4-hydroxyproline. Interaction with guide RNA stretches follow at residues 709 to 710 (KR), 753 to 761 (HAGIQGTSR), and 790 to 812 (YVRC…VAFR). A divalent metal cation is bound at residue His807. 4 positions are modified to phosphoserine: Ser824, Ser828, Ser831, and Ser834.

It belongs to the argonaute family. Ago subfamily. As to quaternary structure, interacts with DICER1 through its Piwi domain and with TARBP2 during assembly of the RNA-induced silencing complex (RISC). Together, DICER1, AGO2 and TARBP2 constitute the trimeric RISC loading complex (RLC), or micro-RNA (miRNA) loading complex (miRLC). Within the RLC/miRLC, DICER1 and TARBP2 are required to process precursor miRNAs (pre-miRNAs) to mature miRNAs and then load them onto AGO2. AGO2 bound to the mature miRNA constitutes the minimal RISC and may subsequently dissociate from DICER1 and TARBP2. Note however that the term RISC has also been used to describe the trimeric RLC/miRLC. The formation of RISC complexes containing siRNAs rather than miRNAs appears to occur independently of DICER1. Interacts with AGO1. Also interacts with DDB1, DDX5, DDX6, DDX20, DHX30, DHX36, DDX47, DHX9, ELAVL, FXR1, GEMIN4, HNRNPF, IGF2BP1, ILF3, IMP8, MATR3, PABPC1, PRMT5, P4HA1, P4HB, RBM4, SART3, TNRC6A, TNRC6B, UPF1 and YBX1. Interacts with the P-body components DCP1A and XRN1. Associates with polysomes and messenger ribonucleoproteins (mNRPs). Interacts with RBM4; the interaction is modulated under stress-induced conditions, occurs under both cell proliferation and differentiation conditions and in an RNA- and phosphorylation-independent manner. Interacts with LIMD1, WTIP and AJUBA. Interacts with TRIM71; the interaction increases in presence of RNA. Interacts with APOBEC3G in an RNA-dependent manner. Interacts with APOBEC3A, APOBEC3C, APOBEC3F and APOBEC3H. Interacts with DICER1, TARBP2, EIF6, MOV10 and RPL7A (60S ribosome subunit); they form a large RNA-induced silencing complex (RISC). Interacts with FMR1. Interacts with ZFP36. Found in a complex, composed of AGO2, CHD7 and ARB2A. Interacts with RC3H1; the interaction is RNA independent. Interacts with SND1. Interacts with SYT11. Interacts with CLNK. Interacts with GARRE1. Interacts with GRB2; this interaction is important for the formation of a ternary complex containing GRB2, AGO2 and DICER1. (Microbial infection) Interacts with Epstein-Barr virus (EBV) tegument protein BGLF2; this interaction participates in the regulation of cellular miRNA by the virus, leading to enhanced SUMOylation. In terms of assembly, (Microbial infection) Interacts with rotavirus A non-structural protein 5; this interaction probably plays a role in the sequestration of AGO2 in viral factories. As to quaternary structure, (Microbial infection) Interacts with human herpesvirus 8 protein MTA/ORF57; this interaction inhibits P-body formation. Requires Mg(2+) as cofactor. Mn(2+) is required as a cofactor. In terms of processing, hydroxylated. 4-hydroxylation appears to enhance protein stability but is not required for miRNA-binding or endonuclease activity. Post-translationally, ubiquitinated on surface-exposed lysines by a SCF-like E3 ubiquitin-protein ligase complex containing ZSWIM8 during target-directed microRNA degradation (TDMD), a process that mediates degradation of microRNAs (miRNAs). Ubiquitination by the SCF-like E3 ubiquitin-protein ligase complex containing ZSWIM8 leads to its subsequent degradation, thereby exposing miRNAs for degradation. ZSWIM8 recognizes and binds AGO2 when it is engaged with a TDMD target. Phosphorylated. A phosphorylation cycle of C-terminal serine cluster (Ser-824-Ser-834) regulates the release of target mRNAs. Target-binding leads to phosphorylation of these residues by CSNK1A1, which reduces the affinity of AGO2 for mRNA and enables target release. The ANKRD52-PPP6C phosphatase complex dephosphorylates the residues, which primes AGO2 for binding a new target. In terms of processing, phosphorylation at Ser-387 by AKT3; leads to up-regulate translational repression of microRNA target and down-regulate endonucleolytic cleavage.

The protein resides in the cytoplasm. It is found in the P-body. Its subcellular location is the nucleus. It catalyses the reaction Endonucleolytic cleavage to 5'-phosphomonoester.. With respect to regulation, inhibited by EDTA. Required for RNA-mediated gene silencing (RNAi) by the RNA-induced silencing complex (RISC). The 'minimal RISC' appears to include AGO2 bound to a short guide RNA such as a microRNA (miRNA) or short interfering RNA (siRNA). These guide RNAs direct RISC to complementary mRNAs that are targets for RISC-mediated gene silencing. The precise mechanism of gene silencing depends on the degree of complementarity between the miRNA or siRNA and its target. Binding of RISC to a perfectly complementary mRNA generally results in silencing due to endonucleolytic cleavage of the mRNA specifically by AGO2. Binding of RISC to a partially complementary mRNA results in silencing through inhibition of translation, and this is independent of endonuclease activity. May inhibit translation initiation by binding to the 7-methylguanosine cap, thereby preventing the recruitment of the translation initiation factor eIF4-E. May also inhibit translation initiation via interaction with EIF6, which itself binds to the 60S ribosomal subunit and prevents its association with the 40S ribosomal subunit. The inhibition of translational initiation leads to the accumulation of the affected mRNA in cytoplasmic processing bodies (P-bodies), where mRNA degradation may subsequently occur. In some cases RISC-mediated translational repression is also observed for miRNAs that perfectly match the 3' untranslated region (3'-UTR). Can also up-regulate the translation of specific mRNAs under certain growth conditions. Binds to the AU element of the 3'-UTR of the TNF (TNF-alpha) mRNA and up-regulates translation under conditions of serum starvation. Also required for transcriptional gene silencing (TGS), in which short RNAs known as antigene RNAs or agRNAs direct the transcriptional repression of complementary promoter regions. Its function is as follows. (Microbial infection) Upon Sars-CoV-2 infection, associates with viral miRNA-like small RNA, CoV2-miR-O7a, and may repress mRNAs, such as BATF2, to evade the IFN response. This is Protein argonaute-2 from Homo sapiens (Human).